The following is a 341-amino-acid chain: KH domain-containing RNA-binding protein QKI (341 aa).

Positions 11-82 are qua1 domain; involved in homodimerization; that stretch reads PNPTPDYLMQ…PDAVGPIVQL (72 aa). A KH domain is found at 87 to 153; the sequence is YVPVKEYPDF…WEHLNEDLHV (67 aa). The segment at 182 to 213 is qua2 domain; involved in RNA binding; that stretch reads AAEGEDSLKKMQLMELAILNGTYRDANIKSPA. S188 is modified (phosphoserine). An Omega-N-methylarginine modification is found at R227. R242 is modified (asymmetric dimethylarginine; by CARM1; alternate). R242 carries the post-translational modification Omega-N-methylarginine; alternate. At R256 the chain carries Omega-N-methylarginine. The short motif at 276-279 is the SH3-binding element; it reads PPGP. Residues 324–330 carry the Nuclear localization signal motif; it reads RVHPYQR.

The protein belongs to the quaking family. Homodimer; does not require RNA to homodimerize. Able to heterodimerize with BICC1. Post-translationally, methylated by PRMT1. Tyrosine phosphorylated at its C-terminus, probably by FYN. Phosphorylation leads to decreased mRNA-binding affinity, affecting transport and/or stabilization of MBP mRNA. In terms of processing, ubiquitinated by RNF6 in macrophages, leading to its degradation. In terms of tissue distribution, present in myelinating oligodendrocytes (at protein level).

The protein resides in the nucleus. Its subcellular location is the cytoplasm. In terms of biological role, RNA reader protein, which recognizes and binds specific RNAs, thereby regulating RNA metabolic processes, such as pre-mRNA splicing, circular RNA (circRNA) formation, mRNA export, mRNA stability and/or translation. Involved in various cellular processes, such as mRNA storage into stress granules, apoptosis, lipid deposition, interferon response, glial cell fate and development. Binds to the 5'-NACUAAY-N(1,20)-UAAY-3' RNA core sequence. Acts as a mRNA modification reader that specifically recognizes and binds mRNA transcripts modified by internal N(7)-methylguanine (m7G). Promotes the formation of circular RNAs (circRNAs) during the epithelial to mesenchymal transition and in cardiomyocytes: acts by binding to sites flanking circRNA-forming exons. CircRNAs are produced by back-splicing circularization of pre-mRNAs. Plays a central role in myelinization via 3 distinct mechanisms. First, acts by protecting and promoting stability of target mRNAs such as MBP, SIRT2 and CDKN1B, which promotes oligodendrocyte differentiation. Second, participates in mRNA transport by regulating the nuclear export of MBP mRNA. Finally, indirectly regulates mRNA splicing of MAG pre-mRNA during oligodendrocyte differentiation by acting as a negative regulator of MAG exon 12 alternative splicing: acts by binding to HNRNPA1 mRNA splicing factor, preventing its translation. Involved in microglia differentiation and remyelination by regulating microexon alternative splicing of the Rho GTPase pathway. Involved in macrophage differentiation: promotes monocyte differentiation by regulating pre-mRNA splicing in naive peripheral blood monocytes. Acts as an important regulator of muscle development: required for the contractile function of cardiomyocytes by regulating alternative splicing of cardiomyocyte transcripts. Acts as a negative regulator of thermogenesis by decreasing stability, nuclear export and translation of mRNAs encoding PPARGC1A and UCP1. Also required for visceral endoderm function and blood vessel development. May also play a role in smooth muscle development. In addition to its RNA-binding activity, also acts as a nuclear transcription coactivator for SREBF2/SREBP2. This Rattus norvegicus (Rat) protein is KH domain-containing RNA-binding protein QKI.